The sequence spans 402 residues: CCA-adding enzyme (402 aa).

ATP-binding residues include G32 and R35. 2 residues coordinate CTP: G32 and R35. Mg(2+)-binding residues include D45 and D47. Residues R119, D162, R165, R168, and R171 each contribute to the ATP site. Positions 119, 162, 165, 168, and 171 each coordinate CTP.

Belongs to the tRNA nucleotidyltransferase/poly(A) polymerase family. Bacterial CCA-adding enzyme type 3 subfamily. In terms of assembly, homodimer. The cofactor is Mg(2+).

It catalyses the reaction a tRNA precursor + 2 CTP + ATP = a tRNA with a 3' CCA end + 3 diphosphate. The enzyme catalyses a tRNA with a 3' CCA end + 2 CTP + ATP = a tRNA with a 3' CCACCA end + 3 diphosphate. Its function is as follows. Catalyzes the addition and repair of the essential 3'-terminal CCA sequence in tRNAs without using a nucleic acid template. Adds these three nucleotides in the order of C, C, and A to the tRNA nucleotide-73, using CTP and ATP as substrates and producing inorganic pyrophosphate. tRNA 3'-terminal CCA addition is required both for tRNA processing and repair. Also involved in tRNA surveillance by mediating tandem CCA addition to generate a CCACCA at the 3' terminus of unstable tRNAs. While stable tRNAs receive only 3'-terminal CCA, unstable tRNAs are marked with CCACCA and rapidly degraded. The protein is CCA-adding enzyme of Lactococcus lactis subsp. cremoris (strain MG1363).